The following is a 222-amino-acid chain: Disulfide bond formation protein D (222 aa).

A signal peptide spans 1–36; the sequence is MKKKQQSSAKFAVILTVVVVVLLAAIVIINNKTEQG. Residues 37–220 form the Thioredoxin domain; the sequence is NDAVSGQPSI…IKETIEKELK (184 aa). A disulfide bridge links Cys-69 with Cys-72.

It belongs to the thioredoxin family. DsbA subfamily.

The protein resides in the cell membrane. It is found in the membrane raft. Required for the stabilization, possibly via formation of a disulfide bond, of the obligatory competence protein ComGC. May be required for the stability of secreted proteins with disulfide bonds. Not required for sporulation. The chain is Disulfide bond formation protein D (bdbD) from Bacillus subtilis (strain 168).